A 738-amino-acid polypeptide reads, in one-letter code: AP-4 complex subunit beta-1 (738 aa).

The tract at residues 534–600 is hinge; that stretch reads CSPKSDPSLG…NASFATSGHL (67 aa). The tract at residues 601-738 is ear; mediates interaction with TEPSIN; sequence ISEENKEGAQ…VIGTVGDIKS (138 aa).

It belongs to the adaptor complexes large subunit family. Adaptor protein complex 4 (AP-4) is a heterotetramer composed of two large adaptins (epsilon-type subunit AP4E1 and beta-type subunit AP4B1), a medium adaptin (mu-type subunit AP4M1) and a small adaptin (sigma-type AP4S1). Interacts with TEPSIN; this interaction requires the presence of a functional AP-4 complex. Interacts with GRIA2; probably indirect it mediates the somatodendritic localization of GRIA2 in neurons.

It is found in the golgi apparatus. The protein resides in the trans-Golgi network membrane. Component of the adaptor protein complex 4 (AP-4). Adaptor protein complexes are vesicle coat components involved both in vesicle formation and cargo selection. They control the vesicular transport of proteins in different trafficking pathways. AP-4 forms a non clathrin-associated coat on vesicles departing the trans-Golgi network (TGN) and may be involved in the targeting of proteins from the trans-Golgi network (TGN) to the endosomal-lysosomal system. It is also involved in protein sorting to the basolateral membrane in epithelial cells and the proper asymmetric localization of somatodendritic proteins in neurons. AP-4 is involved in the recognition and binding of tyrosine-based sorting signals found in the cytoplasmic part of cargos, but may also recognize other types of sorting signal. In Mus musculus (Mouse), this protein is AP-4 complex subunit beta-1.